A 764-amino-acid polypeptide reads, in one-letter code: Thyrotropin receptor (764 aa).

The first 21 residues, 1–21 (MRPGSLLLLVLLLALSRSLRG), serve as a signal peptide directing secretion. Topologically, residues 22–413 (KECASPPCEC…EFNPCEDIMG (392 aa)) are extracellular. The cysteines at positions 31 and 41 are disulfide-linked. Residues Asn-77 and Asn-99 are each glycosylated (N-linked (GlcNAc...) asparagine). LRR repeat units lie at residues 100-124 (LSKMTHIEIRNTRSLTYIDPDALTE), 125-150 (LPLLKFLGIFNTGLRIFPDLTKIYST), 151-174 (DIFFILEITDNPYMTSVPENAFQG), 176-199 (CNETLTLKLYNNGFTSVQGHAFNG), 200-223 (TKLDAVYLNKNKYLTAIDNDAFGG), 225-248 (YSGPTLLDVSSTSVTALPSKGLEH), and 264-288 (PLSLSFLHLTRADLSYPSHCCAFKN). N-linked (GlcNAc...) asparagine glycosylation is found at Asn-177 and Asn-198. The N-linked (GlcNAc...) asparagine glycan is linked to Asn-302. Tyr-385 bears the Sulfotyrosine mark. Residues 414 to 441 (YRFLRIVVWFVSLLALLGNIFVLLILLT) traverse the membrane as a helical segment. Residues 442–450 (SHYKLTVPR) lie on the Cytoplasmic side of the membrane. The helical transmembrane segment at 451 to 473 (FLMCNLAFADFCMGVYLLLIASV) threads the bilayer. The Extracellular portion of the chain corresponds to 474 to 494 (DLYTHSEYYNHAIDWQTGPGC). Cys-494 and Cys-569 are oxidised to a cystine. The chain crosses the membrane as a helical span at residues 495-517 (NTAGFFTVFASELSVYTLTVITL). The Cytoplasmic segment spans residues 518-537 (ERWYAITFAMRLDRKIRLRH). A helical membrane pass occupies residues 538–560 (AYTIMAGGWVSCFLLALLPMVGI). Residues 561-580 (SSYAKVSICLPMDTDTPLAL) lie on the Extracellular side of the membrane. Residues 581–602 (AYIVLVLLLNVVAFVVVCSCYV) traverse the membrane as a helical segment. Topologically, residues 603–625 (KIYITVRNPQYNPRDKDTKIAKR) are cytoplasmic. A helical membrane pass occupies residues 626-649 (MAVLIFTDFMCMAPISFYALSALM). The Extracellular portion of the chain corresponds to 650–660 (NKPLITVTNSK). The chain crosses the membrane as a helical span at residues 661–682 (ILLVLFYPLNSCANPFLYAIFT). The Cytoplasmic portion of the chain corresponds to 683-764 (KAFQRDVFIL…ISEEYKQTAL (82 aa)). Positions 762–764 (TAL) match the PDZ-binding motif.

It belongs to the G-protein coupled receptor 1 family. FSH/LSH/TSH subfamily. As to quaternary structure, interacts with heterodimer GPHA2:GPHB5; this interaction stimulates cAMP production. Interacts (via the PDZ-binding motif) with SCRIB; regulates TSHR trafficking and function. Post-translationally, glycosylated. In terms of processing, sulfated. Sulfation on Tyr-385 plays a role in thyrotropin receptor binding and activation.

It localises to the cell membrane. The protein resides in the basolateral cell membrane. Functionally, receptor for the thyroid-stimulating hormone (TSH) or thyrotropin. Also acts as a receptor for the heterodimeric glycoprotein hormone (GPHA2:GPHB5) or thyrostimulin. The activity of this receptor is mediated by G proteins which activate adenylate cyclase. Plays a central role in controlling thyroid cell metabolism. In Mus musculus (Mouse), this protein is Thyrotropin receptor (Tshr).